A 220-amino-acid polypeptide reads, in one-letter code: Guanylate kinase (220 aa).

The region spanning G11 to R190 is the Guanylate kinase-like domain. S18–T25 serves as a coordination point for ATP.

It belongs to the guanylate kinase family.

The protein localises to the cytoplasm. The catalysed reaction is GMP + ATP = GDP + ADP. Its function is as follows. Essential for recycling GMP and indirectly, cGMP. The polypeptide is Guanylate kinase (Sphingopyxis alaskensis (strain DSM 13593 / LMG 18877 / RB2256) (Sphingomonas alaskensis)).